The following is a 1216-amino-acid chain: ATP-dependent helicase/nuclease subunit A (1216 aa).

Residues 26 to 488 form the UvrD-like helicase ATP-binding domain; that stretch reads QKKTAEQIEA…IILKENFRSS (463 aa). Residue 47-54 participates in ATP binding; that stretch reads ASAGSGKT. Residues 515-802 form the UvrD-like helicase C-terminal domain; that stretch reads KHQLVFANTK…ELMTIHKSKG (288 aa).

The protein belongs to the helicase family. AddA subfamily. In terms of assembly, heterodimer of AddA and AddB/RexB. Requires Mg(2+) as cofactor.

The catalysed reaction is Couples ATP hydrolysis with the unwinding of duplex DNA by translocating in the 3'-5' direction.. It catalyses the reaction ATP + H2O = ADP + phosphate + H(+). The heterodimer acts as both an ATP-dependent DNA helicase and an ATP-dependent, dual-direction single-stranded exonuclease. Recognizes the chi site generating a DNA molecule suitable for the initiation of homologous recombination. The AddA nuclease domain is required for chi fragment generation; this subunit has the helicase and 3' -&gt; 5' nuclease activities. This is ATP-dependent helicase/nuclease subunit A from Streptococcus pneumoniae serotype 2 (strain D39 / NCTC 7466).